We begin with the raw amino-acid sequence, 851 residues long: DNA mismatch repair protein MutS (851 aa).

602–609 (GPNMSGKS) serves as a coordination point for ATP.

The protein belongs to the DNA mismatch repair MutS family.

In terms of biological role, this protein is involved in the repair of mismatches in DNA. It is possible that it carries out the mismatch recognition step. This protein has a weak ATPase activity. This chain is DNA mismatch repair protein MutS, found in Streptococcus equi subsp. equi (strain 4047).